We begin with the raw amino-acid sequence, 315 residues long: Protein LST8 homolog (315 aa).

WD repeat units follow at residues 1-31 (MGDQ…KTMR), 33-71 (VETS…TAPV), 76-115 (GVQK…PHCS), 119-158 (DCES…HECI), 161-200 (EVDA…DQKM), 211-250 (AHTR…KWRE), 253-292 (IENY…PTRE), and 295-315 (GHTK…KVNH).

The protein belongs to the WD repeat LST8 family.

The protein localises to the cytoplasm. The polypeptide is Protein LST8 homolog (Drosophila pseudoobscura pseudoobscura (Fruit fly)).